A 433-amino-acid polypeptide reads, in one-letter code: Enolase (433 aa).

Q167 contributes to the (2R)-2-phosphoglycerate binding site. E209 serves as the catalytic Proton donor. Residues D246, E291, and D318 each coordinate Mg(2+). K343, R372, S373, and K394 together coordinate (2R)-2-phosphoglycerate. The active-site Proton acceptor is the K343.

The protein belongs to the enolase family. As to quaternary structure, component of the RNA degradosome, a multiprotein complex involved in RNA processing and mRNA degradation. Mg(2+) is required as a cofactor.

It is found in the cytoplasm. Its subcellular location is the secreted. It localises to the cell surface. It carries out the reaction (2R)-2-phosphoglycerate = phosphoenolpyruvate + H2O. Its pathway is carbohydrate degradation; glycolysis; pyruvate from D-glyceraldehyde 3-phosphate: step 4/5. Functionally, catalyzes the reversible conversion of 2-phosphoglycerate (2-PG) into phosphoenolpyruvate (PEP). It is essential for the degradation of carbohydrates via glycolysis. The polypeptide is Enolase (Shewanella frigidimarina (strain NCIMB 400)).